The chain runs to 423 residues: Carboxypeptidase S1 (423 aa).

4 disulfides stabilise this stretch: cysteine 8/cysteine 68, cysteine 55/cysteine 300, cysteine 223/cysteine 246, and cysteine 230/cysteine 239. Residue serine 143 is part of the active site. An N-linked (GlcNAc...) asparagine glycan is attached at asparagine 200. Residue aspartate 340 is part of the active site. Cysteine 343 serves as a coordination point for substrate. Histidine 397 is a catalytic residue. Glutamate 398 contacts substrate.

Belongs to the peptidase S10 family.

It catalyses the reaction Preferential release of a C-terminal arginine or lysine residue.. The protein is Carboxypeptidase S1 of Penicillium janthinellum (Penicillium vitale).